Here is a 59-residue protein sequence, read N- to C-terminus: Large ribosomal subunit protein uL30 (59 aa).

This sequence belongs to the universal ribosomal protein uL30 family. As to quaternary structure, part of the 50S ribosomal subunit.

The sequence is that of Large ribosomal subunit protein uL30 from Histophilus somni (strain 129Pt) (Haemophilus somnus).